The sequence spans 636 residues: MSVGETTSAPPTPAPDSDVITSTFSLVDYVVFSLLLVFSLAIGLYHACRGWGKHTVGQLLLADRRMGCLPVALSLLATFQSAVAILGVPSEIYRFGTQYWFLGCCYFLGLLIPAHVFIPVFYRLHLTSAYEYLELRFNKVVRICGTVTFIFQMVIYMGVVLYAPSLALNAVTGFDLWLSVLTLGIVCTIYTALGGLKAVIWTDVFQTLVMFLGQLAVIIVGSAKVGGLGRVWDVASQHGLISGIELDPDPFVRHTFWTLAFGGVFMMLSLYGVNQAQVQRYLSSRTEKAAVLSCYAVFPCQQVALSMGCLIGLVMFAYYQEYPMSTQQSQAASDQFVLYFVMDLLKGLPGLPGLFVACLFSGSLSTISSAFNSLATVTMEDLIRPWFPECSEAQAIMLSRSLAFGYGLLCLGMAYISSQMGPVLQAAISIFGMVGGPLLGLFCLGMFFPCANPPGAIVGLLAGLIMAFWIGIGSIVTSMGSGLAPSPPNGSSFSLPSNLTIATVTTLMPSTSLSKPTGLQRLYSLSYLWYSAHNSTTVIVVGLIVSLLTGGMRGRPPNPRTIYPVLPKLLALLPLSWQKRLHCTSHCQDLPVDTELFPEKMRNGALRASGDKEPMTEASPVHQGTSPTFILHETSL.

A run of 12 helical transmembrane segments spans residues 24–44 (FSLV…AIGL), 68–88 (CLPV…ILGV), 101–121 (FLGC…IPVF), 143–163 (ICGT…VLYA), 176–196 (LWLS…LGGL), 199–219 (VIWT…AVII), 256–276 (FWTL…VNQA), 297–317 (VFPC…VMFA), 336–356 (FVLY…GLFV), 404–424 (FGYG…GPVL), 428–448 (ISIF…GMFF), and 456–476 (AIVG…GSIV). 2 N-linked (GlcNAc...) asparagine glycosylation sites follow: asparagine 489 and asparagine 498. The helical transmembrane segment at 528–548 (LWYSAHNSTTVIVVGLIVSLL) threads the bilayer. A disordered region spans residues 606 to 627 (LRASGDKEPMTEASPVHQGTSP).

This sequence belongs to the sodium:solute symporter (SSF) (TC 2.A.21) family. Interacts with PDZD11.

It localises to the cell membrane. Its subcellular location is the apical cell membrane. The catalysed reaction is biotin(out) + 2 Na(+)(out) = biotin(in) + 2 Na(+)(in). It catalyses the reaction (R)-pantothenate(out) + 2 Na(+)(out) = (R)-pantothenate(in) + 2 Na(+)(in). The enzyme catalyses (R)-lipoate(out) + 2 Na(+)(out) = (R)-lipoate(in) + 2 Na(+)(in). It carries out the reaction iodide(out) + 2 Na(+)(out) = iodide(in) + 2 Na(+)(in). Sodium-dependent multivitamin transporter that mediates the electrogenic transport of pantothenate, biotin, lipoate and iodide. Functions as a Na(+)-coupled substrate symporter where the stoichiometry of Na(+):substrate is 2:1, creating an electrochemical Na(+) gradient used as driving force for substrate uptake. Required for biotin and pantothenate uptake in the intestine across the brush border membrane. Plays a role in the maintenance of intestinal mucosa integrity, by providing the gut mucosa with biotin. Contributes to the luminal uptake of biotin and pantothenate into the brain across the blood-brain barrier. The polypeptide is Sodium-dependent multivitamin transporter (SLC5A6) (Oryctolagus cuniculus (Rabbit)).